The chain runs to 120 residues: Large ribosomal subunit protein uL22 (120 aa).

The interval 1-20 (MFVNRRYTARGKNLPSSPKK) is disordered.

Belongs to the universal ribosomal protein uL22 family. Part of the 50S ribosomal subunit.

In terms of biological role, this protein binds specifically to 23S rRNA; its binding is stimulated by other ribosomal proteins, e.g. L4, L17, and L20. It is important during the early stages of 50S assembly. It makes multiple contacts with different domains of the 23S rRNA in the assembled 50S subunit and ribosome. Its function is as follows. The globular domain of the protein is located near the polypeptide exit tunnel on the outside of the subunit, while an extended beta-hairpin is found that lines the wall of the exit tunnel in the center of the 70S ribosome. The sequence is that of Large ribosomal subunit protein uL22 from Borrelia turicatae (strain 91E135).